The sequence spans 274 residues: Formamidopyrimidine-DNA glycosylase (274 aa).

Catalysis depends on Pro-2, which acts as the Schiff-base intermediate with DNA. Residue Glu-3 is the Proton donor of the active site. Lys-60 functions as the Proton donor; for beta-elimination activity in the catalytic mechanism. Residues His-93 and Arg-112 each contribute to the DNA site. The FPG-type zinc-finger motif lies at 240-274 (DVYGRKGETCRQCGTPITKTVVGGRGTHFCSVCQK). Arg-264 acts as the Proton donor; for delta-elimination activity in catalysis.

This sequence belongs to the FPG family. As to quaternary structure, monomer. Zn(2+) serves as cofactor.

It carries out the reaction Hydrolysis of DNA containing ring-opened 7-methylguanine residues, releasing 2,6-diamino-4-hydroxy-5-(N-methyl)formamidopyrimidine.. The catalysed reaction is 2'-deoxyribonucleotide-(2'-deoxyribose 5'-phosphate)-2'-deoxyribonucleotide-DNA = a 3'-end 2'-deoxyribonucleotide-(2,3-dehydro-2,3-deoxyribose 5'-phosphate)-DNA + a 5'-end 5'-phospho-2'-deoxyribonucleoside-DNA + H(+). Its function is as follows. Involved in base excision repair of DNA damaged by oxidation or by mutagenic agents. Acts as a DNA glycosylase that recognizes and removes damaged bases. Has a preference for oxidized purines, such as 7,8-dihydro-8-oxoguanine (8-oxoG). Has AP (apurinic/apyrimidinic) lyase activity and introduces nicks in the DNA strand. Cleaves the DNA backbone by beta-delta elimination to generate a single-strand break at the site of the removed base with both 3'- and 5'-phosphates. The sequence is that of Formamidopyrimidine-DNA glycosylase (mutM) from Halalkalibacterium halodurans (strain ATCC BAA-125 / DSM 18197 / FERM 7344 / JCM 9153 / C-125) (Bacillus halodurans).